The primary structure comprises 204 residues: NADH-quinone oxidoreductase subunit C (204 aa).

The protein belongs to the complex I 30 kDa subunit family. In terms of assembly, NDH-1 is composed of 14 different subunits. Subunits NuoB, C, D, E, F, and G constitute the peripheral sector of the complex.

The protein localises to the cell inner membrane. The catalysed reaction is a quinone + NADH + 5 H(+)(in) = a quinol + NAD(+) + 4 H(+)(out). In terms of biological role, NDH-1 shuttles electrons from NADH, via FMN and iron-sulfur (Fe-S) centers, to quinones in the respiratory chain. The immediate electron acceptor for the enzyme in this species is believed to be ubiquinone. Couples the redox reaction to proton translocation (for every two electrons transferred, four hydrogen ions are translocated across the cytoplasmic membrane), and thus conserves the redox energy in a proton gradient. This chain is NADH-quinone oxidoreductase subunit C, found in Polaromonas naphthalenivorans (strain CJ2).